Here is a 254-residue protein sequence, read N- to C-terminus: Type III pantothenate kinase (254 aa).

6–13 (DVGNSNIV) provides a ligand contact to ATP. Substrate-binding positions include tyrosine 100 and 107-110 (GADR). The active-site Proton acceptor is aspartate 109. Aspartate 129 provides a ligand contact to K(+). Threonine 132 is an ATP binding site. Threonine 184 is a binding site for substrate.

This sequence belongs to the type III pantothenate kinase family. In terms of assembly, homodimer. NH4(+) is required as a cofactor. K(+) serves as cofactor.

The protein resides in the cytoplasm. The catalysed reaction is (R)-pantothenate + ATP = (R)-4'-phosphopantothenate + ADP + H(+). It functions in the pathway cofactor biosynthesis; coenzyme A biosynthesis; CoA from (R)-pantothenate: step 1/5. Its function is as follows. Catalyzes the phosphorylation of pantothenate (Pan), the first step in CoA biosynthesis. The polypeptide is Type III pantothenate kinase (Citrifermentans bemidjiense (strain ATCC BAA-1014 / DSM 16622 / JCM 12645 / Bem) (Geobacter bemidjiensis)).